The primary structure comprises 623 residues: Dynein axonemal intermediate chain 2 (623 aa).

5 WD repeats span residues 214-254 (KPLS…LVAE), 261-302 (SHRD…EPIE), 362-401 (GHHG…SSIM), 405-445 (YHMA…CDPA), and 450-489 (VCDD…STLQ). Residues 565 to 602 (AEALKKKPKPRKKSSVKVEAEEEVEENVGEEEEAGGII) are disordered. The span at 570 to 579 (KKPKPRKKSS) shows a compositional bias: basic residues. A compositionally biased stretch (acidic residues) spans 584 to 598 (AEEEVEENVGEEEEA).

The protein belongs to the dynein intermediate chain family. As to quaternary structure, consists of at least two heavy chains and a number of intermediate and light chains. Interacts with DNAAF2. Interacts with DNAAF6/PIH1D3. Interacts with HEATR2; probably involved in outer arm dynein assembly. Interacts with CFAP53. As to expression, predominantly expressed in ovary, testis and lung.

The protein localises to the cytoplasm. Its subcellular location is the cytoskeleton. It localises to the cilium axoneme. It is found in the dynein axonemal particle. Part of the dynein complex of respiratory cilia. In Mus musculus (Mouse), this protein is Dynein axonemal intermediate chain 2 (Dnai2).